Consider the following 109-residue polypeptide: uncharacterized protein (109 aa).

Belongs to the archaeal ATPase family.

This is an uncharacterized protein from Methanocaldococcus jannaschii (strain ATCC 43067 / DSM 2661 / JAL-1 / JCM 10045 / NBRC 100440) (Methanococcus jannaschii).